Here is a 393-residue protein sequence, read N- to C-terminus: Chalcone synthase 3 (393 aa).

Residue C166 is part of the active site.

Belongs to the thiolase-like superfamily. Chalcone/stilbene synthases family.

The enzyme catalyses (E)-4-coumaroyl-CoA + 3 malonyl-CoA + 3 H(+) = 2',4,4',6'-tetrahydroxychalcone + 3 CO2 + 4 CoA. The protein operates within secondary metabolite biosynthesis; flavonoid biosynthesis. Its function is as follows. The primary product of this enzyme is 4,2',4',6'-tetrahydroxychalcone (also termed naringenin-chalcone or chalcone) which can under specific conditions spontaneously isomerize into naringenin. The polypeptide is Chalcone synthase 3 (CHS3) (Ruta graveolens (Common rue)).